The sequence spans 390 residues: Protein MalY (390 aa).

Lys-233 is modified (N6-(pyridoxal phosphate)lysine).

It belongs to the class-II pyridoxal-phosphate-dependent aminotransferase family. MalY/PatB cystathionine beta-lyase subfamily. In terms of assembly, homodimer. Interacts with MalT. The cofactor is pyridoxal 5'-phosphate.

It carries out the reaction L,L-cystathionine + H2O = L-homocysteine + pyruvate + NH4(+). The catalysed reaction is an S-substituted L-cysteine + H2O = a thiol + pyruvate + NH4(+). Functionally, acts as a beta-cystathionase and as a repressor of the maltose regulon. In Escherichia coli (strain K12), this protein is Protein MalY (malY).